A 168-amino-acid polypeptide reads, in one-letter code: Lipoprotein signal peptidase (168 aa).

4 helical membrane-spanning segments follow: residues 5–25 (SPYALLVVAAIALDQWIKHLV), 37–57 (LVPFLALFRTYNTGIAFSMFS), 59–79 (FGDTGLVVIAVLVVAFVLYLA), and 85–105 (GHVIARTGFALIIGGALGNLI). Residues Asp-115 and Asp-133 contribute to the active site. A helical membrane pass occupies residues 125-145 (SFAIFNLADAFISVGAALVVF).

The protein belongs to the peptidase A8 family.

It is found in the cell inner membrane. It carries out the reaction Release of signal peptides from bacterial membrane prolipoproteins. Hydrolyzes -Xaa-Yaa-Zaa-|-(S,diacylglyceryl)Cys-, in which Xaa is hydrophobic (preferably Leu), and Yaa (Ala or Ser) and Zaa (Gly or Ala) have small, neutral side chains.. It participates in protein modification; lipoprotein biosynthesis (signal peptide cleavage). Its function is as follows. This protein specifically catalyzes the removal of signal peptides from prolipoproteins. The polypeptide is Lipoprotein signal peptidase (Mesorhizobium japonicum (strain LMG 29417 / CECT 9101 / MAFF 303099) (Mesorhizobium loti (strain MAFF 303099))).